The following is a 66-amino-acid chain: Large ribosomal subunit protein bL31 (66 aa).

Cys16, Cys18, Cys36, and Cys39 together coordinate Zn(2+).

The protein belongs to the bacterial ribosomal protein bL31 family. Type A subfamily. Part of the 50S ribosomal subunit. Requires Zn(2+) as cofactor.

Functionally, binds the 23S rRNA. The polypeptide is Large ribosomal subunit protein bL31 (Thermodesulfovibrio yellowstonii (strain ATCC 51303 / DSM 11347 / YP87)).